We begin with the raw amino-acid sequence, 199 residues long: Cytochrome c-type cyt cy (199 aa).

Residues 7–27 traverse the membrane as a helical segment; sequence ITKIGVTLFAVALFYGFIYML. Residues 69 to 80 show a composition bias toward low complexity; that stretch reads AAETAEAAAPAE. The disordered stretch occupies residues 69–93; that stretch reads AAETAEAAAPAEPAAPPPPAYVEVD. Heme c is bound by residues Cys-112, Cys-115, His-116, and Met-148.

Post-translationally, binds 1 heme c group covalently per subunit.

It localises to the cell membrane. In terms of biological role, electron transfer pathways that operates during photosynthesis. The sequence is that of Cytochrome c-type cyt cy (cycY) from Rhodobacter capsulatus (strain ATCC BAA-309 / NBRC 16581 / SB1003).